The sequence spans 396 residues: S-adenosylmethionine synthase (396 aa).

Histidine 16 contacts ATP. Aspartate 18 lines the Mg(2+) pocket. Glutamate 44 provides a ligand contact to K(+). The L-methionine site is built by glutamate 57 and glutamine 100. The segment at 100-110 (QSVDIAQGVDR) is flexible loop. ATP is bound by residues 165–167 (DAK), 231–232 (KF), aspartate 240, 246–247 (RK), alanine 263, and lysine 267. Aspartate 240 lines the L-methionine pocket. L-methionine is bound at residue lysine 271.

It belongs to the AdoMet synthase family. As to quaternary structure, homotetramer; dimer of dimers. Mg(2+) serves as cofactor. It depends on K(+) as a cofactor.

The protein resides in the cytoplasm. The catalysed reaction is L-methionine + ATP + H2O = S-adenosyl-L-methionine + phosphate + diphosphate. Its pathway is amino-acid biosynthesis; S-adenosyl-L-methionine biosynthesis; S-adenosyl-L-methionine from L-methionine: step 1/1. In terms of biological role, catalyzes the formation of S-adenosylmethionine (AdoMet) from methionine and ATP. The overall synthetic reaction is composed of two sequential steps, AdoMet formation and the subsequent tripolyphosphate hydrolysis which occurs prior to release of AdoMet from the enzyme. This Marinobacter nauticus (strain ATCC 700491 / DSM 11845 / VT8) (Marinobacter aquaeolei) protein is S-adenosylmethionine synthase.